The chain runs to 218 residues: N-(5'-phosphoribosyl)anthranilate isomerase (218 aa).

This sequence belongs to the TrpF family.

The catalysed reaction is N-(5-phospho-beta-D-ribosyl)anthranilate = 1-(2-carboxyphenylamino)-1-deoxy-D-ribulose 5-phosphate. The protein operates within amino-acid biosynthesis; L-tryptophan biosynthesis; L-tryptophan from chorismate: step 3/5. In Rhodospirillum rubrum (strain ATCC 11170 / ATH 1.1.1 / DSM 467 / LMG 4362 / NCIMB 8255 / S1), this protein is N-(5'-phosphoribosyl)anthranilate isomerase.